The primary structure comprises 804 residues: Exocyst complex component 6 (804 aa).

The protein belongs to the SEC15 family. The exocyst complex is composed of EXOC1, EXOC2, EXOC3, EXOC4, EXOC5, EXOC6, EXOC7 and EXOC8. Interacts with CNTRL. Interacts with RAB11A in a GTP-dependent manner.

Its subcellular location is the cytoplasm. It is found in the perinuclear region. It localises to the cell projection. The protein resides in the growth cone. The protein localises to the midbody. Its subcellular location is the midbody ring. Component of the exocyst complex involved in the docking of exocytic vesicles with fusion sites on the plasma membrane. Together with RAB11A, RAB3IP, RAB8A, PARD3, PRKCI, ANXA2, CDC42 and DNMBP promotes transcytosis of PODXL to the apical membrane initiation sites (AMIS), apical surface formation and lumenogenesis. The chain is Exocyst complex component 6 (EXOC6) from Homo sapiens (Human).